A 500-amino-acid polypeptide reads, in one-letter code: NAD(P)H-quinone oxidoreductase chain 4, chloroplastic (500 aa).

A run of 15 helical transmembrane segments spans residues Phe-4–Leu-24, Tyr-35–Phe-55, Ile-87–Val-107, Leu-113–Ser-130, Leu-134–Met-154, Phe-167–Leu-187, Ile-211–His-231, His-242–Val-262, Ala-272–Ala-292, Ile-305–Asp-325, Gly-330–Gly-350, Met-364–Ala-384, Leu-386–Thr-406, Phe-411–Ile-431, and Leu-462–Val-482.

It belongs to the complex I subunit 4 family.

It localises to the plastid. The protein resides in the chloroplast thylakoid membrane. It carries out the reaction a plastoquinone + NADH + (n+1) H(+)(in) = a plastoquinol + NAD(+) + n H(+)(out). The catalysed reaction is a plastoquinone + NADPH + (n+1) H(+)(in) = a plastoquinol + NADP(+) + n H(+)(out). The chain is NAD(P)H-quinone oxidoreductase chain 4, chloroplastic from Capsella bursa-pastoris (Shepherd's purse).